Here is a 1187-residue protein sequence, read N- to C-terminus: DENN domain and WD repeat-containing protein SCD1 (1187 aa).

A uDENN domain is found at 19–179; that stretch reads TVDGDLGFHG…NVPLPTPGKD (161 aa). A cDENN domain is found at 199–330; it reads SLPQADISLQ…EFSTLRNDIL (132 aa). The dDENN domain maps to 332–437; that stretch reads LLHPNVVAID…ERRLSSDEKS (106 aa). 2 disordered regions span residues 508–536 and 765–793; these read SGALESNGRHPPSSPPGKNTKEDNFSSME and SAGLPSPRPKDVSVSDETQQPSEASGRSW. Over residues 526-536 the composition is skewed to basic and acidic residues; it reads NTKEDNFSSME. Polar residues predominate over residues 779–793; that stretch reads SDETQQPSEASGRSW. WD repeat units lie at residues 841 to 892, 897 to 934, 937 to 975, 978 to 1017, 1020 to 1057, 1060 to 1099, 1104 to 1141, and 1152 to 1187; these read GHGG…SELR, GHTGTVRAISSDRGKIVSGSDDLSVIVWDKQTTQLLEE, GHDSQVSCVKMLSGERVLTAAHDGTVKMWDVRTDMCVAT, RCSSAILSLEYDDSTGILAAAGRDTVANIWDIRSGKQMHK, GHTKWIRSIRMVEDTLITGSDDWTARVWSVSRGSCDAV, CHAGPVQSVEYSPFDKGIITGSADGLLRFWENDEGGIKCV, LHSSSILSINAGENWLGIGAADNSMSLFHRPSNAGTKV, and RTAAVVRCVASDLERKRICSGGRNGVLRLWDATINI.

As to quaternary structure, interacts with FLS2. In terms of tissue distribution, expressed in roots, rosette and cauline leaves, buds and flowers.

The protein resides in the cell membrane. It localises to the cytoplasmic vesicle. Its subcellular location is the clathrin-coated vesicle. Involved in growth and development through its role in cytokinesis and polarized cell expansion. Required for plasma membrane internalization. May function in clathrin-mediated membrane trafficking, including plasma membrane endocytosis, essential to both cytokinesis and cell expansion. Acts as a negative regulator of basal resistance against bacteria. The sequence is that of DENN domain and WD repeat-containing protein SCD1 from Arabidopsis thaliana (Mouse-ear cress).